A 130-amino-acid chain; its full sequence is Inner membrane protein YqjF (130 aa).

Residues 1–5 (MKKLE) lie on the Cytoplasmic side of the membrane. A helical transmembrane segment spans residues 6-26 (DVGVLVARILMPILFITAGWG). The Periplasmic segment spans residues 27–45 (KITGYAGTQQYMEAMGVPG). Residues 46–66 (FMLPLVILLEFGGGLAILFGF) form a helical membrane-spanning segment. At 67–70 (LTRT) the chain is on the cytoplasmic side. Residues 71-91 (TALFTAGFTLLTAFLFHSNFA) form a helical membrane-spanning segment. Residues 92–101 (EGVNSLMFMK) are Periplasmic-facing. Residues 102–122 (NLTISGGFLLLAITGPGAYSI) traverse the membrane as a helical segment. The Cytoplasmic segment spans residues 123–130 (DRLLNKKW).

This sequence belongs to the DoxX family.

It is found in the cell inner membrane. In Escherichia coli (strain K12), this protein is Inner membrane protein YqjF (yqjF).